The chain runs to 543 residues: Allantoate permease (543 aa).

The Cytoplasmic portion of the chain corresponds to 1 to 80 (MSADASTNSN…PEEDRKLRWK (80 aa)). A helical membrane pass occupies residues 81-97 (IDYCMFPLMCILYAVQF). At 98-123 (MDKISTSSAAVMGLRTDLKMHGDQYS) the chain is on the extracellular side. A helical transmembrane segment spans residues 124–145 (WVTSAFYFGYLFMNLGPVQFIF). Residues 146-154 (QRTSHMSKM) lie on the Cytoplasmic side of the membrane. The helical transmembrane segment at 155–171 (LAVFIVIWGMLLALHAA) threads the bilayer. Over 172 to 178 (PTVKYPS) the chain is Extracellular. The chain crosses the membrane as a helical span at residues 179-200 (FIVLRVLLGCAESVVTPCFTII). The Cytoplasmic segment spans residues 201–213 (TAQYWKTEEQFTR). A helical transmembrane segment spans residues 214–237 (VSIWFGMNGLGSILINAIAYGVYI). The Extracellular portion of the chain corresponds to 238 to 248 (HQDSYAIKGWR). The helical transmembrane segment at 249-269 (TLFVITGVITIFIGILIFLWI) threads the bilayer. Residues 270 to 317 (PDDPSKARFLSKREKLMVVQRIRSNQQGFGNHEIKKYQIIEALKDVRT) lie on the Cytoplasmic side of the membrane. The chain crosses the membrane as a helical span at residues 318 to 342 (WLYFLFTVSSNIPNGGISSFMSILL). The Extracellular segment spans residues 343-352 (NSDFGYSSKE). Residues 353–377 (TLLMGLPTGAVELVGCPLFGILAVY) form a helical membrane-spanning segment. At 378 to 389 (AANKKIPFWKYK) the chain is on the cytoplasmic side. The chain crosses the membrane as a helical span at residues 390-411 (LSWAIFAAVLALIASCMLGFAT). The Extracellular portion of the chain corresponds to 412–417 (NSKKAR). The helical transmembrane segment at 418–435 (LAGAYLWYISPVSFICVL) threads the bilayer. Residues 436 to 453 (SNISANSSGYSKKWTVSS) lie on the Cytoplasmic side of the membrane. A helical transmembrane segment spans residues 454 to 472 (INLVAYAAANLAGPQTFIA). The Extracellular segment spans residues 473–482 (KQAPKYHGAK). Residues 483 to 504 (VAMVVCYAVMIVLLSILLIVNL) traverse the membrane as a helical segment. At 505 to 543 (RENKRRDKIAAERGFPEETENLEFSDLTDFENPNFRYTL) the chain is on the cytoplasmic side.

This sequence belongs to the major facilitator superfamily. Allantoate permease family.

It is found in the membrane. Component of the allantoate transport system. The sequence is that of Allantoate permease (DAL5) from Saccharomyces cerevisiae (strain ATCC 204508 / S288c) (Baker's yeast).